The primary structure comprises 272 residues: MFDIIKAVIIGIVEGLTEFLPISSTGHIDLVNHVIKLSQSQDFINMFEYVIQFGAILAVILLYFNKLNPFSKPTAKARNATWQLWAKVIIAVLPSVVVGLPLNNWMDEHLHTPLVVATTLIIYGVLFIILENYLKNKNAHITTLADITYQTALLIGLFQVLSIVPGTSRSGATILGALLIGTSRYVATEFSFFLAIPTMVGVSILKIGKYLWQGNGFSGEQWAVLMTGSIVSFLVAIVAIKWLLKFVQTHDFKPFGWYRIALGAIVLLVMFI.

Helical transmembrane passes span 2 to 22 (FDII…FLPI), 43 to 63 (FINM…ILLY), 82 to 102 (WQLW…GLPL), 110 to 130 (LHTP…FIIL), 185 to 205 (YVAT…VSIL), 224 to 244 (VLMT…KWLL), and 252 to 272 (FKPF…VMFI).

It belongs to the UppP family.

It is found in the cell membrane. It catalyses the reaction di-trans,octa-cis-undecaprenyl diphosphate + H2O = di-trans,octa-cis-undecaprenyl phosphate + phosphate + H(+). In terms of biological role, catalyzes the dephosphorylation of undecaprenyl diphosphate (UPP). Confers resistance to bacitracin. In Lacticaseibacillus paracasei (strain ATCC 334 / BCRC 17002 / CCUG 31169 / CIP 107868 / KCTC 3260 / NRRL B-441) (Lactobacillus paracasei), this protein is Undecaprenyl-diphosphatase.